The following is a 313-amino-acid chain: Biotin synthase (313 aa).

The 227-residue stretch at 37 to 263 (YYGKKVKLNM…INPTKEIRIA (227 aa)) folds into the Radical SAM core domain. Positions 55, 59, and 62 each coordinate [4Fe-4S] cluster. [2Fe-2S] cluster-binding residues include cysteine 98, cysteine 131, cysteine 191, and arginine 261.

The protein belongs to the radical SAM superfamily. Biotin synthase family. As to quaternary structure, homodimer. [4Fe-4S] cluster is required as a cofactor. [2Fe-2S] cluster serves as cofactor.

It carries out the reaction (4R,5S)-dethiobiotin + (sulfur carrier)-SH + 2 reduced [2Fe-2S]-[ferredoxin] + 2 S-adenosyl-L-methionine = (sulfur carrier)-H + biotin + 2 5'-deoxyadenosine + 2 L-methionine + 2 oxidized [2Fe-2S]-[ferredoxin]. The protein operates within cofactor biosynthesis; biotin biosynthesis; biotin from 7,8-diaminononanoate: step 2/2. Functionally, catalyzes the conversion of dethiobiotin (DTB) to biotin by the insertion of a sulfur atom into dethiobiotin via a radical-based mechanism. The polypeptide is Biotin synthase (Staphylococcus epidermidis (strain ATCC 12228 / FDA PCI 1200)).